Reading from the N-terminus, the 151-residue chain is Conidium-specific protein (151 aa).

The interval 1–72 (MAKPHCSSRS…FSGDPDSEVE (72 aa)) is disordered. The segment covering 48 to 60 (RKDNSADKGDTLR) has biased composition (basic and acidic residues).

This chain is Conidium-specific protein (SpoC1-C1D), found in Emericella nidulans (strain FGSC A4 / ATCC 38163 / CBS 112.46 / NRRL 194 / M139) (Aspergillus nidulans).